The sequence spans 517 residues: DNA-binding protein (517 aa).

Over residues 1-10 (MASRGGNQSS) the composition is skewed to polar residues. The segment at 1-110 (MASRGGNQSS…DISQDSEEER (110 aa)) is disordered. A compositionally biased stretch (low complexity) spans 64-80 (VLVSETSRSSLSPERSN). Over residues 87–96 (PKKKPRKTKH) the composition is skewed to basic residues. Tyr-180 is subject to Phosphotyrosine; by host. Residues Cys-269 and His-271 each contribute to the Zn(2+) site. Residues 282-316 (IEMDVASENGQRAMKENPDRAKITQNRWGRNVVQL) form a flexible loop region. 6 residues coordinate Zn(2+): Cys-324, Cys-340, Cys-382, Cys-384, Cys-436, and Cys-453. The tract at residues 501–517 (VSLPAGHYDSRQNPFDF) is C-terminal arm, DBP binding.

It belongs to the adenoviridae E2A DNA-binding protein family. Homomultimerizes on viral ssDNA bound to pTP. Forms a initiation complex with viral polymerase, pTP and hosts NFIA and POU2F1/OCT1. Interacts with host SRCAP.

It localises to the host nucleus. In terms of biological role, plays a role in the elongation phase of viral strand displacement replication by unwinding the template in an ATP-independent fashion, employing its capacity to form multimers. Also enhances the rate of initiation. Released from template upon second strand synthesis. Assembles in complex with viral pTP, viral pol, host NFIA and host POU2F1/OCT1 on viral origin of replication. Covers the whole ssDNA genome during synthesis. The complementary strand synthesis induces its relese from DNA template. May inhibit cellular transcription mediated by the interaction between host SRCAP and CBP. The chain is DNA-binding protein from Human adenovirus B serotype 7 (HAdV-7).